The following is a 171-amino-acid chain: Large ribosomal subunit protein uL10 (171 aa).

This sequence belongs to the universal ribosomal protein uL10 family. As to quaternary structure, part of the ribosomal stalk of the 50S ribosomal subunit. The N-terminus interacts with L11 and the large rRNA to form the base of the stalk. The C-terminus forms an elongated spine to which L12 dimers bind in a sequential fashion forming a multimeric L10(L12)X complex.

Its function is as follows. Forms part of the ribosomal stalk, playing a central role in the interaction of the ribosome with GTP-bound translation factors. In Paramagnetospirillum magneticum (strain ATCC 700264 / AMB-1) (Magnetospirillum magneticum), this protein is Large ribosomal subunit protein uL10.